We begin with the raw amino-acid sequence, 82 residues long: Large ribosomal subunit protein bL31B (82 aa).

It belongs to the bacterial ribosomal protein bL31 family. Type B subfamily. In terms of assembly, part of the 50S ribosomal subunit.

In Pectobacterium atrosepticum (strain SCRI 1043 / ATCC BAA-672) (Erwinia carotovora subsp. atroseptica), this protein is Large ribosomal subunit protein bL31B.